We begin with the raw amino-acid sequence, 554 residues long: Thermosome subunit beta (554 aa).

Residues 532-554 (GKKSGSEPSGKKEKDKEEKSSED) form a disordered region. Positions 540–554 (SGKKEKDKEEKSSED) are enriched in basic and acidic residues.

Belongs to the TCP-1 chaperonin family. Forms a Heterooligomeric complex of two stacked eight-membered rings.

Its function is as follows. Molecular chaperone; binds unfolded polypeptides in vitro, and has a weak ATPase activity. The polypeptide is Thermosome subunit beta (thsB) (Saccharolobus solfataricus (strain ATCC 35092 / DSM 1617 / JCM 11322 / P2) (Sulfolobus solfataricus)).